Reading from the N-terminus, the 144-residue chain is Large ribosomal subunit protein uL16 (144 aa).

The protein belongs to the universal ribosomal protein uL16 family. As to quaternary structure, part of the 50S ribosomal subunit.

Its function is as follows. Binds 23S rRNA and is also seen to make contacts with the A and possibly P site tRNAs. The sequence is that of Large ribosomal subunit protein uL16 from Erythrobacter litoralis (strain HTCC2594).